The chain runs to 346 residues: NADH-cytochrome b5 reductase 2 (346 aa).

Residues 28-50 (GGSNAALYAGLAAAAGAGAYYFL) form a helical membrane-spanning segment. The region spanning 95–200 (QGFISLKLDS…KGPIPKYPWS (106 aa)) is the FAD-binding FR-type domain. 203–238 (KHDHIALIAGGTGITPMYQLARAIFNNPADKTKVTL) is a binding site for FAD.

This sequence belongs to the flavoprotein pyridine nucleotide cytochrome reductase family. Requires FAD as cofactor.

Its subcellular location is the mitochondrion outer membrane. It catalyses the reaction 2 Fe(III)-[cytochrome b5] + NADH = 2 Fe(II)-[cytochrome b5] + NAD(+) + H(+). Its function is as follows. May mediate the reduction of outer membrane cytochrome b5. In Botryotinia fuckeliana (strain B05.10) (Noble rot fungus), this protein is NADH-cytochrome b5 reductase 2 (mcr1).